Here is a 946-residue protein sequence, read N- to C-terminus: MVPWVRTMGQKLKQRLRLDVGREICRQYPLFCFLLLCLSAASLLLNRYIHILMIFWSFVAGVVTFYCSLGPDSLLPNIFFTIKYKPKQLGLQELFPQGHSCAVCGKVKCKRHRPSLLLENYQPWLDLKISSKVDASLSEVLELVLENFVYPWYRDVTDDESFVDELRITLRFFASVLIRRIHKVDIPSIITKKLLKAAMKHIEVIVKARQKVKNTEFLQQAALEEYGPELHVALRSRRDELHYLRKLTELLFPYILPPKATDCRSLTLLIREILSGSVFLPSLDFLADPDTVNHLLIIFIDDSPPEKATEPASPLVPFLQKFAEPRNKKPSVLKLELKQIREQQDLLFRFMNFLKQEGAVHVLQFCLTVEEFNDRILRPELSNDEMLSLHEELQKIYKTYCLDESIDKIRFDPFIVEEIQRIAEGPYIDVVKLQTMRCLFEAYEHVLSLLENVFTPMFCHSDEYFRQLLRGAESPTRNSKLNRGSLSLDDFRNTQKRGESFGISRIGSKIKGVFKSTTMEGAMLPNYGVAEGEDDFIEEGIVVMEDDSPVEAVSTPNTPRNLAAWKISIPYVDFFEDPSSERKEKKERIPVFCIDVERNDRRAVGHEPEHWSVYRRYLEFYVLESKLTEFHGAFPDAQLPSKRIIGPKNYEFLKSKREEFQEYLQKLLQHPELSNSQLLADFLSPNGGETQFLDKILPDVNLGKIIKSVPGKLMKEKGQHLEPFIMNFINSCESPKPKPSRPELTILSPTSENNKKLFNDLFKNNANRAENTERKQNQNYFMEVMTVEGVYDYLMYVGRVVFQVPDWLHHLLMGTRILFKNTLEMYTDYYLQCKLEQLFQEHRLVSLITLLRDAIFCENTEPRSLQDKQKGAKQTFEEMMNYIPDLLVKCIGEETKYESIRLLFDGLQQPVLNKQLTYVLLDIVIQELFPELNKVQKEVTSVTSWM.

A run of 2 helical transmembrane segments spans residues 24–44 (ICRQ…ASLL) and 49–69 (IHIL…YCSL). Residues 130–304 (SSKVDASLSE…LLIIFIDDSP (175 aa)) form the PXA domain. In terms of domain architecture, RGS spans 336 to 468 (ELKQIREQQD…CHSDEYFRQL (133 aa)). Residue S548 is modified to Phosphoserine. The region spanning 570 to 690 (PYVDFFEDPS…DFLSPNGGET (121 aa)) is the PX domain.

It belongs to the sorting nexin family. Widely expressed both in fetal and adult tissues.

It localises to the lysosome membrane. The protein localises to the late endosome membrane. It is found in the cell projection. The protein resides in the dendrite. In terms of biological role, plays a role in maintaining normal neuronal excitability and synaptic transmission. May be involved in several stages of intracellular trafficking. Required for autophagosome clearance, possibly by mediating the fusion of lysosomes with autophagosomes. Binds phosphatidylinositol 3,5-bisphosphate (PtdIns(3,5)P2), a key component of late endosomes/lysosomes. Does not bind phosphatidylinositol 3-phosphate (PtdIns(3P)). The sequence is that of Sorting nexin-14 (SNX14) from Homo sapiens (Human).